The primary structure comprises 455 residues: Protein U54 (455 aa).

This sequence belongs to the herpesviridae UL82 family.

The sequence is that of Protein U54 (U54) from Homo sapiens (Human).